A 307-amino-acid polypeptide reads, in one-letter code: tRNA dimethylallyltransferase (307 aa).

16–23 (GCTAVGKT) is a binding site for ATP. Residue 18 to 23 (TAVGKT) coordinates substrate. An interaction with substrate tRNA region spans residues 41-44 (DSLL).

It belongs to the IPP transferase family. As to quaternary structure, monomer. The cofactor is Mg(2+).

The catalysed reaction is adenosine(37) in tRNA + dimethylallyl diphosphate = N(6)-dimethylallyladenosine(37) in tRNA + diphosphate. Its function is as follows. Catalyzes the transfer of a dimethylallyl group onto the adenine at position 37 in tRNAs that read codons beginning with uridine, leading to the formation of N6-(dimethylallyl)adenosine (i(6)A). In Opitutus terrae (strain DSM 11246 / JCM 15787 / PB90-1), this protein is tRNA dimethylallyltransferase.